Here is a 204-residue protein sequence, read N- to C-terminus: Ribosome maturation factor RimM (204 aa).

Positions 117–192 (DEDEFFSADL…EVTIDPPDDL (76 aa)) constitute a PRC barrel domain.

This sequence belongs to the RimM family. In terms of assembly, binds ribosomal protein uS19.

Its subcellular location is the cytoplasm. In terms of biological role, an accessory protein needed during the final step in the assembly of 30S ribosomal subunit, possibly for assembly of the head region. Essential for efficient processing of 16S rRNA. May be needed both before and after RbfA during the maturation of 16S rRNA. It has affinity for free ribosomal 30S subunits but not for 70S ribosomes. The sequence is that of Ribosome maturation factor RimM from Methylobacterium nodulans (strain LMG 21967 / CNCM I-2342 / ORS 2060).